The primary structure comprises 222 residues: Putative O-methyltransferase MAP_2558 (222 aa).

Residues Val49, Glu71, 73–74, Ser79, Asp97, and Ile98 each bind S-adenosyl-L-methionine; that span reads GT. Asp145 provides a ligand contact to substrate. Asp147 is an S-adenosyl-L-methionine binding site.

It belongs to the class I-like SAM-binding methyltransferase superfamily. Cation-dependent O-methyltransferase family.

This is Putative O-methyltransferase MAP_2558 from Mycolicibacterium paratuberculosis (strain ATCC BAA-968 / K-10) (Mycobacterium paratuberculosis).